Reading from the N-terminus, the 258-residue chain is Imidazole glycerol phosphate synthase subunit HisF (258 aa).

Catalysis depends on residues Asp-11 and Asp-130.

Belongs to the HisA/HisF family. Heterodimer of HisH and HisF.

Its subcellular location is the cytoplasm. It carries out the reaction 5-[(5-phospho-1-deoxy-D-ribulos-1-ylimino)methylamino]-1-(5-phospho-beta-D-ribosyl)imidazole-4-carboxamide + L-glutamine = D-erythro-1-(imidazol-4-yl)glycerol 3-phosphate + 5-amino-1-(5-phospho-beta-D-ribosyl)imidazole-4-carboxamide + L-glutamate + H(+). It functions in the pathway amino-acid biosynthesis; L-histidine biosynthesis; L-histidine from 5-phospho-alpha-D-ribose 1-diphosphate: step 5/9. Its function is as follows. IGPS catalyzes the conversion of PRFAR and glutamine to IGP, AICAR and glutamate. The HisF subunit catalyzes the cyclization activity that produces IGP and AICAR from PRFAR using the ammonia provided by the HisH subunit. The sequence is that of Imidazole glycerol phosphate synthase subunit HisF from Escherichia coli O1:K1 / APEC.